We begin with the raw amino-acid sequence, 296 residues long: DNA-3-methyladenine glycosylase (296 aa).

Serine 110 is subject to Phosphoserine. The active-site Proton acceptor is the aspartate 209.

Belongs to the alkylbase DNA glycosidase AlkA family.

It localises to the nucleus. It catalyses the reaction Hydrolysis of alkylated DNA, releasing 3-methyladenine, 3-methylguanine, 7-methylguanine and 7-methyladenine.. Its function is as follows. Hydrolysis of the deoxyribose N-glycosidic bond to excise 3-methyladenine or 7-methyladenine from the damaged DNA polymer formed by alkylation lesions. In Saccharomyces cerevisiae (strain ATCC 204508 / S288c) (Baker's yeast), this protein is DNA-3-methyladenine glycosylase (MAG1).